The sequence spans 354 residues: Glycine betaine/proline betaine transport system permease protein ProW (354 aa).

A disordered region spans residues 1 to 28 (MADQTNPWDTAQVADTTTQTADAWGTPA). Residues 1–99 (MADQTNPWDT…VDYILNGFQQ (99 aa)) lie on the Cytoplasmic side of the membrane. Over residues 9–23 (DTAQVADTTTQTADA) the composition is skewed to low complexity. The helical transmembrane segment at 100–120 (LLLGMPAPVAIILFALIAWQV) threads the bilayer. Ser121 is a topological domain (periplasmic). The chain crosses the membrane as a helical span at residues 122-142 (GVGMGIATLISLIAIGAIGAW). Residues 143–148 (SQAMIT) lie on the Cytoplasmic side of the membrane. Positions 145-324 (AMITLALVLT…ILAIILDRLT (180 aa)) constitute an ABC transmembrane type-1 domain. A helical transmembrane segment spans residues 149-169 (LALVLTALLFCVVIGLPMGIW). Residues 170–198 (LARSPRAAKIVRPLLDAMQTTPAFVYLVP) are Periplasmic-facing. The chain crosses the membrane as a helical span at residues 199-219 (IVMLFGIGNVPGVVVTIIFAL). Topologically, residues 220–270 (PPIVRLTILGINQVPADLIEASRSFGASPRQMLFKVQLPLAMPTIMAGVNQ) are cytoplasmic. Residues 271–291 (TLMLALSMVVIASMIAVGGLG) traverse the membrane as a helical segment. At 292–300 (QMVLRGIGR) the chain is on the periplasmic side. Residues 301-321 (LDMGLATVGGVGIVILAIILD) traverse the membrane as a helical segment. Topologically, residues 322-354 (RLTQAVGRDSRSRGNRRWYTTGPVGLITRPFVK) are cytoplasmic.

The protein belongs to the binding-protein-dependent transport system permease family. CysTW subfamily. In terms of assembly, the complex is composed of two ATP-binding proteins (ProV), two transmembrane proteins (ProW) and a solute-binding protein (ProX).

Its subcellular location is the cell inner membrane. Functionally, part of the ProU ABC transporter complex involved in glycine betaine and proline betaine uptake. Probably responsible for the translocation of the substrate across the membrane. The sequence is that of Glycine betaine/proline betaine transport system permease protein ProW from Salmonella typhimurium (strain LT2 / SGSC1412 / ATCC 700720).